A 238-amino-acid polypeptide reads, in one-letter code: 1-(5-phosphoribosyl)-5-[(5-phosphoribosylamino)methylideneamino] imidazole-4-carboxamide isomerase (238 aa).

D8 serves as the catalytic Proton acceptor. Residue D129 is the Proton donor of the active site.

Belongs to the HisA/HisF family.

The protein localises to the cytoplasm. The enzyme catalyses 1-(5-phospho-beta-D-ribosyl)-5-[(5-phospho-beta-D-ribosylamino)methylideneamino]imidazole-4-carboxamide = 5-[(5-phospho-1-deoxy-D-ribulos-1-ylimino)methylamino]-1-(5-phospho-beta-D-ribosyl)imidazole-4-carboxamide. It functions in the pathway amino-acid biosynthesis; L-histidine biosynthesis; L-histidine from 5-phospho-alpha-D-ribose 1-diphosphate: step 4/9. This is 1-(5-phosphoribosyl)-5-[(5-phosphoribosylamino)methylideneamino] imidazole-4-carboxamide isomerase from Brachyspira hyodysenteriae (strain ATCC 49526 / WA1).